Reading from the N-terminus, the 336-residue chain is Terephthalate 1,2-dioxygenase, reductase component 2 (336 aa).

Positions 3–91 (HQIHIHDSDI…DIRIHPSSFR (89 aa)) constitute a 2Fe-2S ferredoxin-type domain. 4 residues coordinate [2Fe-2S] cluster: cysteine 37, cysteine 42, cysteine 45, and cysteine 75. Positions 98-197 (RKRFTAKVYS…ELPFGSIALK (100 aa)) constitute an FAD-binding FR-type domain.

Monomer. Part of a multicomponent enzyme system composed of a reductase (TphA1I or TphA1II) and a two-subunit oxygenase component (TphA2I or TphA2II and TphA3I or TphA3II). It depends on FAD as a cofactor. The cofactor is [2Fe-2S] cluster.

It carries out the reaction terephthalate + NADH + O2 + H(+) = (3S,4R)-3,4-dihydroxycyclohexa-1,5-diene-1,4-dicarboxylate + NAD(+). Its function is as follows. Component of the terephthalate 1,2-dioxygenase multicomponent enzyme system which catalyzes the dioxygenation of terephthalate (TER/TPA) to 1,2-dihydroxy-3,5-cyclohexadiene-1,4-dicarboxylic acid (DCD). TphA1 probably reduces TphA2A3. It can also use 2,5-dicarboxypyridine (PDC) and 1,4-napthalenedicarboxylic acid (NDC) as substrates, and preferentially uses NADPH which is the physiological electron donor. The polypeptide is Terephthalate 1,2-dioxygenase, reductase component 2 (tphA1II) (Comamonas sp).